Consider the following 103-residue polypeptide: Colicin-V (103 aa).

The propeptide occupies 1–15; that stretch reads MRTLTLNELDSVSGG. A disulfide bridge connects residues Cys-91 and Cys-102.

Its subcellular location is the secreted. Colicin V kills sensitive cells by disrupting the membrane potential. Functionally, colicins are polypeptide toxins produced by, and active against E.coli and closely related bacteria. This chain is Colicin-V (cvaC), found in Escherichia coli.